The sequence spans 296 residues: Protoheme IX farnesyltransferase (296 aa).

Helical transmembrane passes span 9–29 (VTKP…FLLA), 36–56 (YPLF…GCVF), 84–104 (AVSL…LWFG), 108–128 (LACW…SLYM), 133–153 (VYGT…GYCA), 163–183 (LILL…IAIF), 209–229 (ITLY…GGYA), 234–254 (LVVA…GYKV), and 265–285 (FGFS…DFMV).

It belongs to the UbiA prenyltransferase family. Protoheme IX farnesyltransferase subfamily.

It localises to the cell inner membrane. The enzyme catalyses heme b + (2E,6E)-farnesyl diphosphate + H2O = Fe(II)-heme o + diphosphate. It participates in porphyrin-containing compound metabolism; heme O biosynthesis; heme O from protoheme: step 1/1. Its function is as follows. Converts heme B (protoheme IX) to heme O by substitution of the vinyl group on carbon 2 of heme B porphyrin ring with a hydroxyethyl farnesyl side group. This is Protoheme IX farnesyltransferase from Citrobacter koseri (strain ATCC BAA-895 / CDC 4225-83 / SGSC4696).